Reading from the N-terminus, the 314-residue chain is Olfactory receptor 10T2 (314 aa).

Over 1-26 (MRGFNKTTVVTQFILVGFSSLGELQL) the chain is Extracellular. An N-linked (GlcNAc...) asparagine glycan is attached at Asn-5. A helical membrane pass occupies residues 27 to 47 (LLFVIFLLLYLTILVANVTIM). The Cytoplasmic segment spans residues 48–55 (AVIRFSWT). A helical transmembrane segment spans residues 56-76 (LHTPMYGFLFILSFSESCYTF). Topologically, residues 77-100 (VIIPQLLVHLLSDTKTISFMACAT) are extracellular. Cys-98 and Cys-190 form a disulfide bridge. A helical transmembrane segment spans residues 101 to 121 (QLFFFLGFACTNCLLIAVMGY). Over 122–140 (DRYVAICHPLRYTLIINKR) the chain is Cytoplasmic. The helical transmembrane segment at 141 to 161 (LGLELISLSGATGFFIALVAT) threads the bilayer. Residues 162–198 (NLICDMRFCGPNRVNHYFCDMAPVIKLACTDTHVKEL) lie on the Extracellular side of the membrane. A helical transmembrane segment spans residues 199–218 (ALFSLSILVIMVPFLLILIS). At 219–237 (YGFIVNTILKIPSAEGKKA) the chain is on the cytoplasmic side. Residues 238–258 (FVTCASHLTVVFVHYGCASII) traverse the membrane as a helical segment. Residues 259-271 (YLRPKSKSASDKD) are Extracellular-facing. A helical membrane pass occupies residues 272-292 (QLVAVTYTVVTPLLNPLVYSL). Residues 293 to 314 (RNKEVKTALKRVLGMPVATKMS) lie on the Cytoplasmic side of the membrane.

This sequence belongs to the G-protein coupled receptor 1 family.

The protein localises to the cell membrane. Odorant receptor. In Homo sapiens (Human), this protein is Olfactory receptor 10T2 (OR10T2).